Here is a 537-residue protein sequence, read N- to C-terminus: Chaperonin GroEL (537 aa).

ATP-binding positions include 29–32 (TLGP), 86–90 (DGTTT), glycine 413, and aspartate 492.

It belongs to the chaperonin (HSP60) family. Forms a cylinder of 14 subunits composed of two heptameric rings stacked back-to-back. Interacts with the co-chaperonin GroES.

The protein resides in the cytoplasm. The catalysed reaction is ATP + H2O + a folded polypeptide = ADP + phosphate + an unfolded polypeptide.. In terms of biological role, together with its co-chaperonin GroES, plays an essential role in assisting protein folding. The GroEL-GroES system forms a nano-cage that allows encapsulation of the non-native substrate proteins and provides a physical environment optimized to promote and accelerate protein folding. The polypeptide is Chaperonin GroEL (Dehalococcoides mccartyi (strain ATCC BAA-2266 / KCTC 15142 / 195) (Dehalococcoides ethenogenes (strain 195))).